A 110-amino-acid polypeptide reads, in one-letter code: Class I hydrophobin 2 (110 aa).

The N-terminal stretch at 1-17 is a signal peptide; sequence MQFKFLTTVALATLAVA. 4 disulfides stabilise this stretch: Cys-28/Cys-89, Cys-36/Cys-83, Cys-37/Cys-71, and Cys-90/Cys-103. N-linked (GlcNAc...) asparagine glycosylation occurs at Asn-57.

This sequence belongs to the fungal hydrophobin family. In terms of assembly, self-assembles to form functional amyloid fibrils called rodlets. Self-assembly into fibrillar rodlets occurs spontaneously at hydrophobic:hydrophilic interfaces and the rodlets further associate laterally to form amphipathic monolayers.

The protein resides in the secreted. The protein localises to the cell wall. In terms of biological role, aerial growth, conidiation, and dispersal of filamentous fungi in the environment rely upon a capability of their secreting small amphipathic proteins called hydrophobins (HPBs) with low sequence identity. Class I can self-assemble into an outermost layer of rodlet bundles on aerial cell surfaces, conferring cellular hydrophobicity that supports fungal growth, development and dispersal; whereas Class II form highly ordered films at water-air interfaces through intermolecular interactions but contribute nothing to the rodlet structure. CoH2 is an asexual monokaryon-specific class I hydrophobin that is involved in aerial growth of mycelia. This chain is Class I hydrophobin 2, found in Coprinopsis cinerea (Inky cap fungus).